We begin with the raw amino-acid sequence, 102 residues long: Large ribosomal subunit protein bL21 (102 aa).

Residues 79 to 91 (RKDSKRKKGHRQP) are compositionally biased toward basic residues. Positions 79–102 (RKDSKRKKGHRQPYTKLTIDKINA) are disordered.

It belongs to the bacterial ribosomal protein bL21 family. In terms of assembly, part of the 50S ribosomal subunit. Contacts protein L20.

This protein binds to 23S rRNA in the presence of protein L20. This chain is Large ribosomal subunit protein bL21, found in Staphylococcus carnosus (strain TM300).